Here is a 446-residue protein sequence, read N- to C-terminus: T-box transcription factor TBX20 (446 aa).

The disordered stretch occupies residues 50-80 (SCHPNLGDLPPLETHSDFSSGGGTGSGAPLC). A DNA-binding region (T-box) is located at residues 108–287 (LWDKFHELGT…SNPFAKGFRD (180 aa)).

Its subcellular location is the nucleus. Functionally, transcriptional regulator that may play a very early role in the differentiation of the cardiac precursors. The protein is T-box transcription factor TBX20 (tbx20) of Danio rerio (Zebrafish).